The primary structure comprises 81 residues: Photosystem I iron-sulfur center (81 aa).

2 consecutive 4Fe-4S ferredoxin-type domains span residues 2-31 (SHSV…MVPW) and 39-68 (IASA…VRVY). The [4Fe-4S] cluster site is built by Cys11, Cys14, Cys17, Cys21, Cys48, Cys51, Cys54, and Cys58.

As to quaternary structure, the eukaryotic PSI reaction center is composed of at least 11 subunits. The cofactor is [4Fe-4S] cluster.

Its subcellular location is the plastid. It localises to the chloroplast thylakoid membrane. It catalyses the reaction reduced [plastocyanin] + hnu + oxidized [2Fe-2S]-[ferredoxin] = oxidized [plastocyanin] + reduced [2Fe-2S]-[ferredoxin]. Apoprotein for the two 4Fe-4S centers FA and FB of photosystem I (PSI); essential for photochemical activity. FB is the terminal electron acceptor of PSI, donating electrons to ferredoxin. The C-terminus interacts with PsaA/B/D and helps assemble the protein into the PSI complex. Required for binding of PsaD and PsaE to PSI. PSI is a plastocyanin/cytochrome c6-ferredoxin oxidoreductase, converting photonic excitation into a charge separation, which transfers an electron from the donor P700 chlorophyll pair to the spectroscopically characterized acceptors A0, A1, FX, FA and FB in turn. In Pleurastrum terricola (Filamentous green alga), this protein is Photosystem I iron-sulfur center.